Consider the following 75-residue polypeptide: UPF0150 protein TM_1313 (75 aa).

The protein belongs to the UPF0150 family.

The chain is UPF0150 protein TM_1313 from Thermotoga maritima (strain ATCC 43589 / DSM 3109 / JCM 10099 / NBRC 100826 / MSB8).